The chain runs to 150 residues: Transthyretin (150 aa).

The N-terminal stretch at 1 to 20 (MASYRLLLLCLAGLVFVSEA) is a signal peptide. Cys30 bears the Sulfocysteine mark. Lys35 serves as a coordination point for L-thyroxine. Glu62 is subject to 4-carboxyglutamate. Position 74 (Glu74) interacts with L-thyroxine. N-linked (GlcNAc...) asparagine glycosylation occurs at Asn118. Ser137 provides a ligand contact to L-thyroxine.

The protein belongs to the transthyretin family. As to quaternary structure, homotetramer. Dimer of dimers. In the homotetramer, subunits assemble around a central channel that can accommodate two ligand molecules. Interacts with RBP4. Post-translationally, sulfonation of the reactive cysteine Cys-30 enhances the stability of the native conformation of TTR, avoiding misassembly of the protein leading to amyloid formation. In terms of tissue distribution, detected in plasma and cerebrospinal fluid (at protein level). Highly expressed in the choroid plexus. Detected in liver.

It is found in the secreted. In terms of biological role, thyroid hormone-binding protein. Probably transports thyroxine from the bloodstream to the brain. The chain is Transthyretin (TTR) from Sus scrofa (Pig).